Reading from the N-terminus, the 159-residue chain is 2-C-methyl-D-erythritol 2,4-cyclodiphosphate synthase (159 aa).

Residues Asp10 and His12 each contribute to the a divalent metal cation site. 4-CDP-2-C-methyl-D-erythritol 2-phosphate contacts are provided by residues 10 to 12 (DVH) and 36 to 37 (HS). His44 serves as a coordination point for a divalent metal cation. Residues 58–60 (DIG), 134–137 (TTSE), Phe141, and Arg144 contribute to the 4-CDP-2-C-methyl-D-erythritol 2-phosphate site.

It belongs to the IspF family. In terms of assembly, homotrimer. Requires a divalent metal cation as cofactor.

The enzyme catalyses 4-CDP-2-C-methyl-D-erythritol 2-phosphate = 2-C-methyl-D-erythritol 2,4-cyclic diphosphate + CMP. It participates in isoprenoid biosynthesis; isopentenyl diphosphate biosynthesis via DXP pathway; isopentenyl diphosphate from 1-deoxy-D-xylulose 5-phosphate: step 4/6. In terms of biological role, involved in the biosynthesis of isopentenyl diphosphate (IPP) and dimethylallyl diphosphate (DMAPP), two major building blocks of isoprenoid compounds. Catalyzes the conversion of 4-diphosphocytidyl-2-C-methyl-D-erythritol 2-phosphate (CDP-ME2P) to 2-C-methyl-D-erythritol 2,4-cyclodiphosphate (ME-CPP) with a corresponding release of cytidine 5-monophosphate (CMP). The protein is 2-C-methyl-D-erythritol 2,4-cyclodiphosphate synthase of Cereibacter sphaeroides (strain ATCC 17025 / ATH 2.4.3) (Rhodobacter sphaeroides).